Reading from the N-terminus, the 160-residue chain is Cytochrome b6-f complex subunit 4 (160 aa).

The next 3 membrane-spanning stretches (helical) occupy residues 36 to 56 (LLYIFPVVILGTIACVVGLAV), 95 to 115 (LLGIALQTLVPLGLMLVPFIE), and 128 to 148 (VAMTVFLFGTFTTIYLGIGAA).

It belongs to the cytochrome b family. PetD subfamily. The 4 large subunits of the cytochrome b6-f complex are cytochrome b6, subunit IV (17 kDa polypeptide, PetD), cytochrome f and the Rieske protein, while the 4 small subunits are PetG, PetL, PetM and PetN. The complex functions as a dimer.

Its subcellular location is the cellular thylakoid membrane. In terms of biological role, component of the cytochrome b6-f complex, which mediates electron transfer between photosystem II (PSII) and photosystem I (PSI), cyclic electron flow around PSI, and state transitions. The protein is Cytochrome b6-f complex subunit 4 of Synechococcus sp. (strain CC9902).